The primary structure comprises 79 residues: Acyl carrier protein (79 aa).

One can recognise a Carrier domain in the interval 2–77; sequence SDIGERVKKI…DATKFLEKNA (76 aa). Serine 37 carries the O-(pantetheine 4'-phosphoryl)serine modification.

It belongs to the acyl carrier protein (ACP) family. Post-translationally, 4'-phosphopantetheine is transferred from CoA to a specific serine of apo-ACP by AcpS. This modification is essential for activity because fatty acids are bound in thioester linkage to the sulfhydryl of the prosthetic group.

It localises to the cytoplasm. The protein operates within lipid metabolism; fatty acid biosynthesis. Functionally, carrier of the growing fatty acid chain in fatty acid biosynthesis. The sequence is that of Acyl carrier protein from Bradyrhizobium diazoefficiens (strain JCM 10833 / BCRC 13528 / IAM 13628 / NBRC 14792 / USDA 110).